We begin with the raw amino-acid sequence, 724 residues long: Phosphoribosylformylglycinamidine synthase subunit PurL (724 aa).

Residue histidine 34 is part of the active site. Position 37 (tyrosine 37) interacts with ATP. Mg(2+) is bound at residue glutamate 78. Substrate contacts are provided by residues serine 79–histidine 82 and arginine 101. Histidine 80 serves as the catalytic Proton acceptor. Position 102 (aspartate 102) interacts with Mg(2+). Glutamine 226 contributes to the substrate binding site. Aspartate 254 lines the Mg(2+) pocket. Position 298 to 300 (glutamate 298 to glutamine 300) interacts with substrate. Positions 480 and 517 each coordinate ATP. Asparagine 518 serves as a coordination point for Mg(2+). Substrate is bound at residue serine 520.

Belongs to the FGAMS family. Monomer. Part of the FGAM synthase complex composed of 1 PurL, 1 PurQ and 2 PurS subunits.

It localises to the cytoplasm. The catalysed reaction is N(2)-formyl-N(1)-(5-phospho-beta-D-ribosyl)glycinamide + L-glutamine + ATP + H2O = 2-formamido-N(1)-(5-O-phospho-beta-D-ribosyl)acetamidine + L-glutamate + ADP + phosphate + H(+). It participates in purine metabolism; IMP biosynthesis via de novo pathway; 5-amino-1-(5-phospho-D-ribosyl)imidazole from N(2)-formyl-N(1)-(5-phospho-D-ribosyl)glycinamide: step 1/2. Functionally, part of the phosphoribosylformylglycinamidine synthase complex involved in the purines biosynthetic pathway. Catalyzes the ATP-dependent conversion of formylglycinamide ribonucleotide (FGAR) and glutamine to yield formylglycinamidine ribonucleotide (FGAM) and glutamate. The FGAM synthase complex is composed of three subunits. PurQ produces an ammonia molecule by converting glutamine to glutamate. PurL transfers the ammonia molecule to FGAR to form FGAM in an ATP-dependent manner. PurS interacts with PurQ and PurL and is thought to assist in the transfer of the ammonia molecule from PurQ to PurL. The polypeptide is Phosphoribosylformylglycinamidine synthase subunit PurL (Methanopyrus kandleri (strain AV19 / DSM 6324 / JCM 9639 / NBRC 100938)).